A 413-amino-acid chain; its full sequence is Glucose-1-phosphatase (413 aa).

Residues 1–22 (MKKSLLAVAVAGAVLLSSAVQA) form the signal peptide. Residue arginine 39 coordinates substrate. The Nucleophile role is filled by histidine 40. 3 residues coordinate substrate: arginine 43, arginine 116, and glutamate 218. Catalysis depends on aspartate 312, which acts as the Proton donor.

Belongs to the histidine acid phosphatase family. Homodimer.

Its subcellular location is the periplasm. The catalysed reaction is alpha-D-glucose 1-phosphate + H2O = D-glucose + phosphate. The protein is Glucose-1-phosphatase (agp) of Salmonella typhimurium (strain LT2 / SGSC1412 / ATCC 700720).